We begin with the raw amino-acid sequence, 214 residues long: Glutathione S-transferase F11 (214 aa).

A GST N-terminal domain is found at V2–G82. Residues A11–A12, Q40–K41, Q53–V54, and E66–S67 each bind glutathione. The 126-residue stretch at T89–Y214 folds into the GST C-terminal domain.

The protein belongs to the GST superfamily. Phi family.

It is found in the cytoplasm. The protein localises to the cytosol. The catalysed reaction is RX + glutathione = an S-substituted glutathione + a halide anion + H(+). Functionally, may be involved in the conjugation of reduced glutathione to a wide number of exogenous and endogenous hydrophobic electrophiles and have a detoxification role against certain herbicides. The polypeptide is Glutathione S-transferase F11 (Arabidopsis thaliana (Mouse-ear cress)).